Consider the following 94-residue polypeptide: Large ribosomal subunit protein eL33 (94 aa).

This sequence belongs to the eukaryotic ribosomal protein eL33 family.

The polypeptide is Large ribosomal subunit protein eL33 (Aeropyrum pernix (strain ATCC 700893 / DSM 11879 / JCM 9820 / NBRC 100138 / K1)).